The sequence spans 107 residues: Putative double-stranded DNA mimic protein ECA2319 (107 aa).

It belongs to the putative dsDNA mimic protein family.

Its function is as follows. May act as a double-stranded DNA (dsDNA) mimic. Probably regulates the activity of a dsDNA-binding protein. This is Putative double-stranded DNA mimic protein ECA2319 from Pectobacterium atrosepticum (strain SCRI 1043 / ATCC BAA-672) (Erwinia carotovora subsp. atroseptica).